The following is a 352-amino-acid chain: 26S proteasome regulatory subunit rpn-8 (352 aa).

Positions 16–152 constitute an MPN domain; sequence VSVAPLVLLS…TDAYFAVDEI (137 aa). Residues 303–352 are disordered; sequence NRQQQEENDAKKKEGENGEKKEGADKKEGSPAAANGESKEKENSPKEKKK. 2 stretches are compositionally biased toward basic and acidic residues: residues 306–331 and 339–352; these read QQEE…KKEG and ESKE…EKKK.

It belongs to the peptidase M67A family.

Its function is as follows. Acts as a regulatory subunit of the 26S proteasome which is involved in the ATP-dependent degradation of ubiquitinated proteins. The protein is 26S proteasome regulatory subunit rpn-8 (rpn-8) of Neurospora crassa (strain ATCC 24698 / 74-OR23-1A / CBS 708.71 / DSM 1257 / FGSC 987).